The following is a 250-amino-acid chain: tRNA (guanine-N(1)-)-methyltransferase (250 aa).

S-adenosyl-L-methionine is bound by residues Gly-116 and 136–141 (IGDYVL).

This sequence belongs to the RNA methyltransferase TrmD family. As to quaternary structure, homodimer.

The protein localises to the cytoplasm. It carries out the reaction guanosine(37) in tRNA + S-adenosyl-L-methionine = N(1)-methylguanosine(37) in tRNA + S-adenosyl-L-homocysteine + H(+). In terms of biological role, specifically methylates guanosine-37 in various tRNAs. This chain is tRNA (guanine-N(1)-)-methyltransferase, found in Pseudomonas putida (strain ATCC 700007 / DSM 6899 / JCM 31910 / BCRC 17059 / LMG 24140 / F1).